Here is a 794-residue protein sequence, read N- to C-terminus: MTDTQAAAERIAQLRTELDTHNYRYYVLDEPSIPDAEYDRLFRELQALEAEHPQLLTPDSPTQRVSGTPASAFGEVRHEIPMLSLGNAFEEQDLLDFDRRVREGLADLLPGGDLLGGGAEVEYSCEPKLDGLAVSLLYENGQLVRGATRGDGSTGEDITSNVRTIRNVPLKLHGEGWPDILEVRGEVFMSRAGFEALNAKAVETGGKTFANPRNAAAGSLRQLDSKITASRPLEFCAYGFGRVSGTLPDTQVGILEAFRGWGIPISRELRLVKGAQACRDYYDDIGRRRDALAYEIDGVVFKVNRIAFQRELGFRAREPRWAIAHKFPAREELTELLGVEFQVGRTGAVTPVARLKPVQVAGVTVSNATLHNMDEVARLGLRIGDTVVIRRAGDVIPQVMQVVLERRPADAQPIEVPEHCPVCGSAVERTQLVRRSKGRESLSEGAIYRCVGRLSCQAQLKQAIIHFVSRRAMDIDGLGDKIVEQLVDRGLVASPADLYTLTYDQVFELEGFAELSTNNLLAAIADSRTPSLARFIFALGIPDVGEETAKLLARSLGSLERIGKALPEVLTYLPDVGAEVAYEIHNFFADEHNRQVIAQLRDAEHGVQLQEEGEVAAEFAACASLAGFIDKLNIPFIAATGAEKLASRFGSLDGIIRADWLDLRQVERLPERAAKSLRDFLDEPANVQRALAIEAQLREFGMHWQSERKAVEGLPLAGQTWVLTGTLEAMSRDVAKEKLEGLGAKVAGSVSARTHCVVAGPGAGSKLAKANELGLKVLDEDGLLKLLDEYGVAH.

NAD(+) is bound by residues 35-39, 84-85, and glutamate 126; these read DAEYD and SL. The active-site N6-AMP-lysine intermediate is lysine 128. Residues arginine 149, glutamate 186, lysine 302, and lysine 326 each contribute to the NAD(+) site. Zn(2+) is bound by residues cysteine 420, cysteine 423, cysteine 450, and cysteine 456. Residues 711–794 enclose the BRCT domain; sequence VEGLPLAGQT…KLLDEYGVAH (84 aa).

It belongs to the NAD-dependent DNA ligase family. LigA subfamily. It depends on Mg(2+) as a cofactor. The cofactor is Mn(2+).

It catalyses the reaction NAD(+) + (deoxyribonucleotide)n-3'-hydroxyl + 5'-phospho-(deoxyribonucleotide)m = (deoxyribonucleotide)n+m + AMP + beta-nicotinamide D-nucleotide.. Its function is as follows. DNA ligase that catalyzes the formation of phosphodiester linkages between 5'-phosphoryl and 3'-hydroxyl groups in double-stranded DNA using NAD as a coenzyme and as the energy source for the reaction. It is essential for DNA replication and repair of damaged DNA. This is DNA ligase from Pseudomonas paraeruginosa (strain DSM 24068 / PA7) (Pseudomonas aeruginosa (strain PA7)).